We begin with the raw amino-acid sequence, 145 residues long: NADH dehydrogenase [ubiquinone] 1 alpha subcomplex subunit 12 (145 aa).

Met1 is subject to N-acetylmethionine.

It belongs to the complex I NDUFA12 subunit family. Complex I is composed of 45 different subunits.

The protein localises to the mitochondrion inner membrane. Functionally, accessory subunit of the mitochondrial membrane respiratory chain NADH dehydrogenase (Complex I), that is believed not to be involved in catalysis. Complex I functions in the transfer of electrons from NADH to the respiratory chain. The immediate electron acceptor for the enzyme is believed to be ubiquinone. The polypeptide is NADH dehydrogenase [ubiquinone] 1 alpha subcomplex subunit 12 (Ndufa12) (Mus musculus (Mouse)).